A 99-amino-acid chain; its full sequence is Small ribosomal subunit protein uS19 (99 aa).

Residues Thr77–Arg99 are disordered.

Belongs to the universal ribosomal protein uS19 family.

Functionally, protein S19 forms a complex with S13 that binds strongly to the 16S ribosomal RNA. The chain is Small ribosomal subunit protein uS19 from Sorangium cellulosum (strain So ce56) (Polyangium cellulosum (strain So ce56)).